A 358-amino-acid polypeptide reads, in one-letter code: Neutral protease 2 homolog PABG_02362 (358 aa).

The N-terminal stretch at 1-19 (MRRVSGILAVAAFTISAFA) is a signal peptide. Positions 20–182 (GVIQPVAKDA…FAAMNQFVKI (163 aa)) are excised as a propeptide. 2 disulfides stabilise this stretch: Cys188-Cys259 and Cys266-Cys284. N-linked (GlcNAc...) asparagine glycosylation occurs at Asn249. His309 lines the Zn(2+) pocket. Residue Glu310 is part of the active site. Positions 313 and 324 each coordinate Zn(2+).

This sequence belongs to the peptidase M35 family. Zn(2+) is required as a cofactor.

It localises to the secreted. It carries out the reaction Preferential cleavage of bonds with hydrophobic residues in P1'. Also 3-Asn-|-Gln-4 and 8-Gly-|-Ser-9 bonds in insulin B chain.. Its function is as follows. Secreted metalloproteinase that allows assimilation of proteinaceous substrates. Shows high activities on basic nuclear substrates such as histone and protamine. The polypeptide is Neutral protease 2 homolog PABG_02362 (Paracoccidioides brasiliensis (strain Pb03)).